We begin with the raw amino-acid sequence, 248 residues long: Probable transcriptional regulatory protein Psyr_1407 (248 aa).

Belongs to the TACO1 family.

It localises to the cytoplasm. The chain is Probable transcriptional regulatory protein Psyr_1407 from Pseudomonas syringae pv. syringae (strain B728a).